The sequence spans 825 residues: Taste receptor cell protein 1 (825 aa).

The N-terminal stretch at 1–21 (MDKQWFPAAGILLAALLVVSA) is a signal peptide. Disordered stretches follow at residues 66-97 (EREP…GPSG) and 299-322 (TSPS…SASP). Low complexity predominate over residues 302-322 (SQASSLHSPRPSSASPLSASP).

As to expression, expression is restricted to circumvallate papillae.

The protein is Taste receptor cell protein 1 (Trcg1) of Mus musculus (Mouse).